The sequence spans 562 residues: Membrane protein insertase YidC (562 aa).

The helical transmembrane segment at 1–21 threads the bilayer; sequence MDIKRTILIVALAIVTYVGVL. Residues 42-74 form a disordered region; it reads TAPGIPDTAAGNNGSASADVPSATGNTTSAAPL. Helical transmembrane passes span 343–363, 369–389, 439–459, 470–490, and 517–537; these read LELTVDYGFLWFIAQPIFWLL, ILGNWGWSIIVLTMLIKGLFF, LGGCLPILVQMPVFLSLYWVL, WILWITDLSIKDPFFILPIIM, and PIIFTFFFLWFPAGLVLYWVV.

It belongs to the OXA1/ALB3/YidC family. Type 1 subfamily. In terms of assembly, interacts with the Sec translocase complex via SecD. Specifically interacts with transmembrane segments of nascent integral membrane proteins during membrane integration.

It localises to the cell inner membrane. In terms of biological role, required for the insertion and/or proper folding and/or complex formation of integral membrane proteins into the membrane. Involved in integration of membrane proteins that insert both dependently and independently of the Sec translocase complex, as well as at least some lipoproteins. Aids folding of multispanning membrane proteins. The protein is Membrane protein insertase YidC of Pseudomonas syringae pv. tomato (strain ATCC BAA-871 / DC3000).